The sequence spans 188 residues: Putative protein SSX9 (188 aa).

In terms of domain architecture, KRAB-related spans 20 to 83 (KIQKAFDDIA…TGATDLQGND (64 aa)). Positions 114 to 165 (KKPAEVGNDSKEVPEASGLQNDGKQLCPPGKPTTSEKINKASGPKRGKHAWT) are disordered. Basic and acidic residues predominate over residues 115-127 (KPAEVGNDSKEVP). A Phosphoserine modification is found at Ser-123. The segment covering 156-165 (GPKRGKHAWT) has biased composition (basic residues).

The protein belongs to the SSX family. Not detected in any normal or tumor tissues.

Could act as a modulator of transcription. This Homo sapiens (Human) protein is Putative protein SSX9.